The sequence spans 351 residues: Dihydroorotate dehydrogenase (quinone) (351 aa).

FMN contacts are provided by residues 65 to 69 (AGLDK) and Thr89. Residue Lys69 participates in substrate binding. 114 to 118 (NRLGF) is a substrate binding site. FMN contacts are provided by Asn150 and Asn183. Asn183 contributes to the substrate binding site. The Nucleophile role is filled by Ser186. Asn188 contributes to the substrate binding site. Residues Lys228 and Thr256 each coordinate FMN. A substrate-binding site is contributed by 257 to 258 (NT). FMN contacts are provided by residues Gly279, Gly308, and 329–330 (YT).

The protein belongs to the dihydroorotate dehydrogenase family. Type 2 subfamily. In terms of assembly, monomer. It depends on FMN as a cofactor.

It localises to the cell membrane. It carries out the reaction (S)-dihydroorotate + a quinone = orotate + a quinol. The protein operates within pyrimidine metabolism; UMP biosynthesis via de novo pathway; orotate from (S)-dihydroorotate (quinone route): step 1/1. Functionally, catalyzes the conversion of dihydroorotate to orotate with quinone as electron acceptor. The protein is Dihydroorotate dehydrogenase (quinone) of Acidovorax ebreus (strain TPSY) (Diaphorobacter sp. (strain TPSY)).